Here is a 336-residue protein sequence, read N- to C-terminus: Lipoyl synthase (336 aa).

[4Fe-4S] cluster-binding residues include C81, C86, C92, C107, C111, C114, and S323. The region spanning 93–312 (FGHGTATFMI…EDYGYELGFS (220 aa)) is the Radical SAM core domain.

It belongs to the radical SAM superfamily. Lipoyl synthase family. Requires [4Fe-4S] cluster as cofactor.

The protein localises to the cytoplasm. The catalysed reaction is [[Fe-S] cluster scaffold protein carrying a second [4Fe-4S](2+) cluster] + N(6)-octanoyl-L-lysyl-[protein] + 2 oxidized [2Fe-2S]-[ferredoxin] + 2 S-adenosyl-L-methionine + 4 H(+) = [[Fe-S] cluster scaffold protein] + N(6)-[(R)-dihydrolipoyl]-L-lysyl-[protein] + 4 Fe(3+) + 2 hydrogen sulfide + 2 5'-deoxyadenosine + 2 L-methionine + 2 reduced [2Fe-2S]-[ferredoxin]. The protein operates within protein modification; protein lipoylation via endogenous pathway; protein N(6)-(lipoyl)lysine from octanoyl-[acyl-carrier-protein]: step 2/2. Functionally, catalyzes the radical-mediated insertion of two sulfur atoms into the C-6 and C-8 positions of the octanoyl moiety bound to the lipoyl domains of lipoate-dependent enzymes, thereby converting the octanoylated domains into lipoylated derivatives. In Stenotrophomonas maltophilia (strain R551-3), this protein is Lipoyl synthase.